The following is a 286-amino-acid chain: Putative WUSCHEL-related homeobox 2 (286 aa).

Disordered regions lie at residues 1–25 (MAPAVQQQQSGGGGGSTGAAAVGST) and 128–152 (SSSSSCGGGLNEDANSLLSPTSPTT). A DNA-binding region (homeobox; WUS-type) is located at residues 23–87 (GSTTRWCPTP…NHKARDRQKL (65 aa)).

This sequence belongs to the WUS homeobox family.

It is found in the nucleus. In terms of biological role, transcription factor which may be involved in developmental processes. The polypeptide is Putative WUSCHEL-related homeobox 2 (WOX2) (Oryza sativa subsp. indica (Rice)).